Here is a 1363-residue protein sequence, read N- to C-terminus: Collagen alpha-2(I) chain (1363 aa).

The N-terminal stretch at 1-22 is a signal peptide; that stretch reads MLSFVDTRILLLLAVTSYLATS. Position 23 is a pyrrolidone carboxylic acid (glutamine 23). A propeptide spans 23–77 (N-terminal propeptide); sequence QHLFQASAGRKGPRGDKGPQGERGPPGPPGRDGEDGPPGPPGPPGPPGLGGNFAA. The tract at residues 28-1110 is disordered; it reads ASAGRKGPRG…GPNGGGYEVG (1083 aa). A compositionally biased stretch (pro residues) spans 59–69; the sequence is PPGPPGPPGPP. The residue at position 78 (glutamine 78) is a Pyrrolidone carboxylic acid. Lysine 83 is modified (allysine). Residues 88-97 are compositionally biased toward low complexity; the sequence is GPGPMGLMGP. Residues 98 to 110 show a composition bias toward pro residues; the sequence is RGPPGASGPPGPP. A compositionally biased stretch (low complexity) spans 112–128; that stretch reads FQGVPGEPGEPGQTGPQ. Residues 140–154 show a composition bias toward basic and acidic residues; that stretch reads AGEDGHPGKPGRPGE. At lysine 176 the chain carries 5-hydroxylysine; alternate. Lysine 176 is a glycosylation site (O-linked (Gal...) hydroxylysine; alternate). Low complexity-rich tracts occupy residues 224 to 263 and 299 to 320; these read IGAPGPAGARGSDGSAGPTGPAGPIGAAGPPGFPGAPGAK and PGANGLPGAKGAAGLPGVAGAP. The span at 322–335 shows a compositional bias: pro residues; the sequence is LPGPRGIPGPPGPA. 4-hydroxyproline occurs at positions 440 and 443. Low complexity-rich tracts occupy residues 601–610 and 674–683; these read PAGPIGSRGP and RGLPGAIGAP. Gly residues predominate over residues 684–699; the sequence is GPAGGAGDRGEGGPAG. The span at 721–736 shows a compositional bias: low complexity; sequence PSGFAGPPGAAGQPGA. Positions 737-746 are enriched in basic and acidic residues; it reads KGERGPKGPK. Composition is skewed to low complexity over residues 748–794, 842–875, 898–931, 955–965, and 986–995; these read ETGP…AGRV, AGEKGPSGEAGAAGPPGTPGPQGILGAPGILGLP, VSGPPGARGPSGPVGSPGPNGAPGEAGRDGNPGN, PSGALGAPGPH, and VGPAGAFGPR. Residues 1004–1015 show a composition bias toward basic and acidic residues; that stretch reads RGEKGEPGDKGH. Residues 1036-1049 are compositionally biased toward low complexity; the sequence is QHGDQGPPGNNGPA. 2 stretches are compositionally biased toward pro residues: residues 1051-1060 and 1088-1102; these read PRGPPGPSGP and AGPPGPPGPPGPPGP. A propeptide spans 1118–1363 (C-terminal propeptide); the sequence is ADQPSLRPKD…GLHIGPVCFK (246 aa). The Fibrillar collagen NC1 domain occupies 1128-1363; that stretch reads YEVDATLKTL…GLHIGPVCFK (236 aa). 3 cysteine pairs are disulfide-bonded: cysteine 1158/cysteine 1190, cysteine 1198/cysteine 1361, and cysteine 1269/cysteine 1314. Residues aspartate 1176, asparagine 1178, glutamine 1179, cysteine 1181, and aspartate 1184 each coordinate Ca(2+). The N-linked (GlcNAc...) asparagine glycan is linked to asparagine 1264.

This sequence belongs to the fibrillar collagen family. Trimers of one alpha 2(I) and two alpha 1(I) chains. Prolines at the third position of the tripeptide repeating unit (G-X-Y) are hydroxylated in some or all of the chains. In terms of processing, the N-terminus of the mature protein is blocked. As to expression, forms the fibrils of tendon, ligaments and bones. In bones the fibrils are mineralized with calcium hydroxyapatite.

The protein resides in the secreted. The protein localises to the extracellular space. It localises to the extracellular matrix. In terms of biological role, type I collagen is a member of group I collagen (fibrillar forming collagen). This chain is Collagen alpha-2(I) chain (COL1A2), found in Gallus gallus (Chicken).